Consider the following 470-residue polypeptide: Neuraminidase (470 aa).

At 1–6 (MNPNQK) the chain is on the intravirion side. Residues 7–27 (IITIGSISIAIGIISLMLQIG) traverse the membrane as a helical segment. Positions 11 to 33 (GSISIAIGIISLMLQIGNIISIW) are involved in apical transport and lipid raft association. Over 28–470 (NIISIWASHS…GAELPFTIDK (443 aa)) the chain is Virion surface. The hypervariable stalk region stretch occupies residues 36 to 90 (HSIQTGSQNHTGICNQRIITYENSTWVNHTYVNINNTNVVAGKDKTSVTLAGNSS). N-linked (GlcNAc...) asparagine; by host glycans are attached at residues N44, N58, N63, N70, and N88. The segment at 91–470 (LCSISGWAIY…GAELPFTIDK (380 aa)) is head of neuraminidase. Cystine bridges form between C92–C417, C124–C129, C184–C231, C233–C238, C279–C292, C281–C290, C318–C335, and C421–C447. Residue R118 participates in substrate binding. N146 is a glycosylation site (N-linked (GlcNAc...) asparagine; by host). D151 acts as the Proton donor/acceptor in catalysis. R152 contacts substrate. N235 is a glycosylation site (N-linked (GlcNAc...) asparagine; by host). Residue 277-278 (EE) participates in substrate binding. R293 provides a ligand contact to substrate. Residues D294, G298, and D324 each contribute to the Ca(2+) site. R368 is a substrate binding site. Catalysis depends on Y402, which acts as the Nucleophile. 2 N-linked (GlcNAc...) asparagine; by host glycosylation sites follow: N434 and N455.

The protein belongs to the glycosyl hydrolase 34 family. As to quaternary structure, homotetramer. The cofactor is Ca(2+). In terms of processing, N-glycosylated.

The protein localises to the virion membrane. It is found in the host apical cell membrane. The catalysed reaction is Hydrolysis of alpha-(2-&gt;3)-, alpha-(2-&gt;6)-, alpha-(2-&gt;8)- glycosidic linkages of terminal sialic acid residues in oligosaccharides, glycoproteins, glycolipids, colominic acid and synthetic substrates.. Its activity is regulated as follows. Inhibited by the neuraminidase inhibitors zanamivir (Relenza) and oseltamivir (Tamiflu). These drugs interfere with the release of progeny virus from infected cells and are effective against all influenza strains. Resistance to neuraminidase inhibitors is quite rare. Catalyzes the removal of terminal sialic acid residues from viral and cellular glycoconjugates. Cleaves off the terminal sialic acids on the glycosylated HA during virus budding to facilitate virus release. Additionally helps virus spread through the circulation by further removing sialic acids from the cell surface. These cleavages prevent self-aggregation and ensure the efficient spread of the progeny virus from cell to cell. Otherwise, infection would be limited to one round of replication. Described as a receptor-destroying enzyme because it cleaves a terminal sialic acid from the cellular receptors. May facilitate viral invasion of the upper airways by cleaving the sialic acid moieties on the mucin of the airway epithelial cells. Likely to plays a role in the budding process through its association with lipid rafts during intracellular transport. May additionally display a raft-association independent effect on budding. Plays a role in the determination of host range restriction on replication and virulence. Sialidase activity in late endosome/lysosome traffic seems to enhance virus replication. The polypeptide is Neuraminidase (Aves (Human)).